The chain runs to 122 residues: Basic phospholipase A2 LmTX-I (122 aa).

Intrachain disulfides connect Cys26–Cys115, Cys28–Cys44, Cys43–Cys95, Cys49–Cys122, Cys50–Cys88, and Cys75–Cys86. Positions 27, 29, and 31 each coordinate Ca(2+). His47 is an active-site residue. Asp48 is a binding site for Ca(2+). The active site involves Asp89.

In terms of assembly, monomer. Ca(2+) is required as a cofactor. In terms of tissue distribution, expressed by the venom gland.

The protein localises to the secreted. The enzyme catalyses a 1,2-diacyl-sn-glycero-3-phosphocholine + H2O = a 1-acyl-sn-glycero-3-phosphocholine + a fatty acid + H(+). Inhibited by Mn(2+), Mg(2+), Zn(2+) and Cu(2+). Functionally, snake venom phospholipase A2 (PLA2) that displays neurotoxic and myotoxic activities. Induces inflammatory edema by mechanisms involving mast cell activation and arachidonic acid metabolites. Increases plasma creatine kinase activity. PLA2 catalyzes the calcium-dependent hydrolysis of the 2-acyl groups in 3-sn-phosphoglycerides. This chain is Basic phospholipase A2 LmTX-I, found in Lachesis muta muta (Bushmaster).